We begin with the raw amino-acid sequence, 40 residues long: uncharacterized protein (40 aa).

This is an uncharacterized protein from Treponema pallidum (strain Nichols).